Consider the following 445-residue polypeptide: UPF0210 protein SP_0239 (445 aa).

This sequence belongs to the UPF0210 family. Homodimer.

The polypeptide is UPF0210 protein SP_0239 (Streptococcus pneumoniae serotype 4 (strain ATCC BAA-334 / TIGR4)).